A 108-amino-acid polypeptide reads, in one-letter code: MTSLGSQLHRATFLTALLLLLLLQVKGVKTLIVSASLDGDKSQKDKVSSEDQGEEEYEEHFEASSEGEQWQEIDMVQQEDTISQAITLQDHLLDLAFCFNLASIMFFL.

A signal peptide spans 1–30 (MTSLGSQLHRATFLTALLLLLLLQVKGVKT). A compositionally biased stretch (basic and acidic residues) spans 39 to 49 (GDKSQKDKVSS). Residues 39–64 (GDKSQKDKVSSEDQGEEEYEEHFEAS) are disordered.

In terms of tissue distribution, detected in testicular germ cells and spermatozoa (at protein level). Abundantly expressed in testis.

The protein resides in the secreted. Functionally, sperm protein required for fusion of sperm with the egg membrane during fertilization. This chain is Sperm-egg fusion protein LLCFC1, found in Mus musculus (Mouse).